Here is a 92-residue protein sequence, read N- to C-terminus: Large ribosomal subunit protein bL28 (92 aa).

The protein belongs to the bacterial ribosomal protein bL28 family.

The protein is Large ribosomal subunit protein bL28 of Borreliella burgdorferi (strain ATCC 35210 / DSM 4680 / CIP 102532 / B31) (Borrelia burgdorferi).